The following is a 292-amino-acid chain: 4-hydroxy-tetrahydrodipicolinate synthase (292 aa).

Thr-50 contributes to the pyruvate binding site. Catalysis depends on Tyr-139, which acts as the Proton donor/acceptor. Lys-167 (schiff-base intermediate with substrate) is an active-site residue. Ile-208 provides a ligand contact to pyruvate.

The protein belongs to the DapA family. In terms of assembly, homotetramer; dimer of dimers.

It localises to the cytoplasm. The enzyme catalyses L-aspartate 4-semialdehyde + pyruvate = (2S,4S)-4-hydroxy-2,3,4,5-tetrahydrodipicolinate + H2O + H(+). Its pathway is amino-acid biosynthesis; L-lysine biosynthesis via DAP pathway; (S)-tetrahydrodipicolinate from L-aspartate: step 3/4. Its function is as follows. Catalyzes the condensation of (S)-aspartate-beta-semialdehyde [(S)-ASA] and pyruvate to 4-hydroxy-tetrahydrodipicolinate (HTPA). The polypeptide is 4-hydroxy-tetrahydrodipicolinate synthase (Oenococcus oeni (strain ATCC BAA-331 / PSU-1)).